We begin with the raw amino-acid sequence, 674 residues long: Putative kinase-like protein TMKL1 (674 aa).

The first 25 residues, Met-1–Thr-25, serve as a signal peptide directing secretion. Topologically, residues Ser-26–Arg-295 are extracellular. Residues Asn-57, Asn-90, Asn-95, and Asn-110 are each glycosylated (N-linked (GlcNAc...) asparagine). LRR repeat units follow at residues His-100–Phe-122, Met-124–Thr-146, Ser-148–Asn-169, and Lys-173–Pro-194. Asn-183 and Asn-195 each carry an N-linked (GlcNAc...) asparagine glycan. LRR repeat units follow at residues Asn-200 to Phe-222, Gly-224 to Gly-244, and Glu-247 to Lys-269. Asn-252 and Asn-257 each carry an N-linked (GlcNAc...) asparagine glycan. Residues Leu-296–Leu-323 form a helical membrane-spanning segment. Over Gln-324–Phe-674 the chain is Cytoplasmic. Residues Ser-331 to Lys-350 form a disordered region. Over residues Glu-333 to Gly-348 the composition is skewed to acidic residues. Ser-334 is modified (phosphoserine). The Protein kinase domain occupies Asn-373 to Phe-674. Residue Thr-375 is modified to Phosphothreonine. Ser-454 carries the post-translational modification Phosphoserine. The segment at Leu-649–Phe-674 is disordered.

It belongs to the protein kinase superfamily.

It localises to the membrane. Its function is as follows. Does not seem to have conserved a kinase activity. The sequence is that of Putative kinase-like protein TMKL1 (TMKL1) from Arabidopsis thaliana (Mouse-ear cress).